Here is a 477-residue protein sequence, read N- to C-terminus: Glycogen synthase (477 aa).

Residue K15 coordinates ADP-alpha-D-glucose.

The protein belongs to the glycosyltransferase 1 family. Bacterial/plant glycogen synthase subfamily.

The enzyme catalyses [(1-&gt;4)-alpha-D-glucosyl](n) + ADP-alpha-D-glucose = [(1-&gt;4)-alpha-D-glucosyl](n+1) + ADP + H(+). It functions in the pathway glycan biosynthesis; glycogen biosynthesis. Its function is as follows. Synthesizes alpha-1,4-glucan chains using ADP-glucose. This chain is Glycogen synthase, found in Mannheimia succiniciproducens (strain KCTC 0769BP / MBEL55E).